We begin with the raw amino-acid sequence, 29 residues long: Dermaseptin-J6 (29 aa).

Valine 29 carries the post-translational modification Valine amide.

In terms of tissue distribution, expressed by the skin glands.

The protein localises to the secreted. Its function is as follows. Has antimicrobial activity. This is Dermaseptin-J6 from Phasmahyla jandaia (Jandaia leaf frog).